Here is a 396-residue protein sequence, read N- to C-terminus: Lipid-A-disaccharide synthase (396 aa).

Belongs to the LpxB family.

The catalysed reaction is a lipid X + a UDP-2-N,3-O-bis[(3R)-3-hydroxyacyl]-alpha-D-glucosamine = a lipid A disaccharide + UDP + H(+). Its pathway is bacterial outer membrane biogenesis; LPS lipid A biosynthesis. Functionally, condensation of UDP-2,3-diacylglucosamine and 2,3-diacylglucosamine-1-phosphate to form lipid A disaccharide, a precursor of lipid A, a phosphorylated glycolipid that anchors the lipopolysaccharide to the outer membrane of the cell. The chain is Lipid-A-disaccharide synthase from Rhodopseudomonas palustris (strain BisB18).